The primary structure comprises 115 residues: ATP synthase subunits region ORF 7 (115 aa).

The protein is ATP synthase subunits region ORF 7 of Fuscovulum blasticum (Rhodobacter blasticus).